Reading from the N-terminus, the 139-residue chain is Mitochondrial intermembrane space import and assembly protein 40-A (139 aa).

Cystine bridges form between C53–C55, C64–C97, and C74–C87. Residues S61–Y105 enclose the CHCH domain. 2 short sequence motifs (cx9C motif) span residues C64–C74 and C87–C97. Residues D103–S139 are disordered. The span at E115 to E124 shows a compositional bias: basic and acidic residues.

As to quaternary structure, monomer. Can form homooligomers.

The protein localises to the mitochondrion intermembrane space. Functionally, central component of a redox-sensitive mitochondrial intermembrane space import machinery which is required for the biogenesis of respiratory chain complexes. Functions as chaperone and catalyzes the formation of disulfide bonds in substrate proteins, such as COX17 or MICU1. Required for the import and folding of small cysteine-containing proteins (small Tim) in the mitochondrial intermembrane space (IMS). Precursor proteins to be imported into the IMS are translocated in their reduced form into the mitochondria. The sequence is that of Mitochondrial intermembrane space import and assembly protein 40-A (chchd4-a) from Xenopus laevis (African clawed frog).